Reading from the N-terminus, the 103-residue chain is Phosphoribosyl-ATP pyrophosphatase (103 aa).

Belongs to the PRA-PH family.

It localises to the cytoplasm. The enzyme catalyses 1-(5-phospho-beta-D-ribosyl)-ATP + H2O = 1-(5-phospho-beta-D-ribosyl)-5'-AMP + diphosphate + H(+). It participates in amino-acid biosynthesis; L-histidine biosynthesis; L-histidine from 5-phospho-alpha-D-ribose 1-diphosphate: step 2/9. The protein is Phosphoribosyl-ATP pyrophosphatase of Cereibacter sphaeroides (strain KD131 / KCTC 12085) (Rhodobacter sphaeroides).